The primary structure comprises 423 residues: Methionine aminopeptidase 2 (423 aa).

Basic and acidic residues predominate over residues 1–17; sequence MTDVIDAKPEEAKKVPP. Residues 1–89 are disordered; sequence MTDVIDAKPE…IQPYKDDNAY (89 aa). Residues 18 to 29 are compositionally biased toward acidic residues; the sequence is EVEDEDSGDESA. The segment covering 41–54 has biased composition (basic residues); sequence KKKKKKKKPKKKKK. Residue H176 coordinates substrate. D196, D207, and H276 together coordinate a divalent metal cation. Position 284 (H284) interacts with substrate. 2 residues coordinate a divalent metal cation: E309 and E404.

The protein belongs to the peptidase M24A family. Methionine aminopeptidase eukaryotic type 2 subfamily. Requires Co(2+) as cofactor. Zn(2+) serves as cofactor. Mn(2+) is required as a cofactor. The cofactor is Fe(2+).

The protein localises to the cytoplasm. It catalyses the reaction Release of N-terminal amino acids, preferentially methionine, from peptides and arylamides.. Its function is as follows. Cotranslationally removes the N-terminal methionine from nascent proteins. The N-terminal methionine is often cleaved when the second residue in the primary sequence is small and uncharged (Met-Ala-, Cys, Gly, Pro, Ser, Thr, or Val). The polypeptide is Methionine aminopeptidase 2 (Schizophyllum commune (strain H4-8 / FGSC 9210) (Split gill fungus)).